The sequence spans 710 residues: MDEHNVHHFWGISPAVDLGTLLPTGDGAADLPVDQPVRFLQVAPYDARHTLTTLSRACRHPALMRQLPPGQPACRLYVWEDSPEGLARHVLLAAVLLDGGVPAAQRGQLLLELHGNAVLRRRAAEYLDEKARQLESLFVGLAAGQPPPAGPEAEARGLAALAALLDLSLLKFQEKDLIVEALQRWRLPNPTSSTSTSAASASAAAAPYDMVAAWDGRCRKVYGERYDFRRNMVDWDYHMRLQPAGTPGCDPASGSIIHFHHFRHWRLHGVAHELRDSAYNSANRCRGEGGVGEFKDRTGRDVGRSVSAWGFWADVLNSPYHAFGTACEQPEFYRITNKQFVRTAVDVAEHNIAALLHELRTGRRLELGEGQEAHRAQAARGPTTLEDLTAAAEEAAAAASGAGAEAGAGAGPGGEAAAGASSSSGKEEAAAAAAAGKEQGQGEGQGEDWTAGSGSGAPGAGTGQAVAEGREGPGGPQDSDPAAAASTAAPAAAAAAASSSSTSVPTYSSGGRAQVAKAMAAAAAAAGAGAGAGAEASSSGAASAASAAPTAGASSGAADGKAAEAAAAPLDEAAREQMAAEEAAVRAAEAALDAAARQRAGRFRLVLVTGDLAKTLTGRAKYAGAFSGLSLGHRHTHMLEPQYKLAAAAAPGARLVAENARHVLQLSQEQAALFAAKMDELAAAGGWRPLPAAQRPPGITEAAAVYVRAA.

Residues 403–487 (GAEAGAGAGP…DSDPAAAAST (85 aa)) are disordered. A compositionally biased stretch (gly residues) spans 404 to 416 (AEAGAGAGPGGEA). Residues 417–438 (AAGASSSSGKEEAAAAAAAGKE) show a composition bias toward low complexity. Gly residues predominate over residues 453–462 (SGSGAPGAGT). The segment covering 478-487 (DSDPAAAAST) has biased composition (low complexity).

Belongs to the DNAAF3 family.

Its subcellular location is the cytoplasm. Required for the assembly of axonemal inner and outer dynein arms. Involved in preassembly of dyneins into complexes before their transport into cilia. The polypeptide is Dynein axonemal assembly factor 3 homolog (DAB1) (Chlamydomonas reinhardtii (Chlamydomonas smithii)).